A 776-amino-acid polypeptide reads, in one-letter code: MKCPKILAALLGCAVLAGVPAMPAHAAINSMSLGASYDAQQANITFRVYSSQATRIVLYLYSAGYGVQESATYTLSPAGSGVWAVTVPVSSIKAAGITGAVYYGYRAWGPNWPYASNWGKGSQAGFVSDVDANGDRFNPNKLLLDPYAQEVSQDPLNPSNQNGNVFASGASYRTTDSGIYAPKGVVLVPSTQSTGTKPTRAQKDDVIYEVHVRGFTEQDTSIPAQYRGTYYGAGLKASYLASLGVTAVEFLPVQETQNDANDVVPNSDANQNYWGYMTENYFSPDRRYAYNKAAGGPTAEFQAMVQAFHNAGIKVYMDVVYNHTAEGGTWTSSDPTTATIYSWRGLDNATYYELTSGNQYFYDNTGIGANFNTYNTVAQNLIVDSLAYWANTMGVDGFRFDLASVLGNSCLNGAYTASAPNCPNGGYNFDAADSNVAINRILREFTVRPAAGGSGLDLFAEPWAIGGNSYQLGGFPQGWSEWNGLFRDSLRQAQNELGSMTIYVTQDANDFSGSSNLFQSSGRSPWNSINFIDVHDGMTLKDVYSCNGANNSQAWPYGPSDGGTSTNYSWDQGMSAGTGAAVDQRRAARTGMAFEMLSAGTPLMQGGDEYLRTLQCNNNAYNLDSSANWLTYSWTTDQSNFYTFAQRLIAFRKAHPALRPSSWYSGSQLTWYQPSGAVADSNYWNNTSNYAIAYAINGPSLGDSNSIYVAYNGWSSSVTFTLPAPPSGTQWYRVTDTCDWNDGASTFVAPGSETLIGGAGTTYGQCGQSLLLLISK.

The first 26 residues, 1–26 (MKCPKILAALLGCAVLAGVPAMPAHA), serve as a signal peptide directing secretion. Ca(2+)-binding residues include Asp-154, Glu-255, Thr-256, Asn-258, and Asp-285. The Nucleophile role is filled by Asp-401. Cysteines 410 and 422 form a disulfide. Residue Glu-461 is the Proton donor of the active site. Cystine bridges form between Cys-546-Cys-616 and Cys-738-Cys-766.

The protein belongs to the glycosyl hydrolase 13 family. In terms of assembly, monomer. Ca(2+) serves as cofactor.

It is found in the secreted. It catalyses the reaction Hydrolysis of (1-&gt;6)-alpha-D-glucosidic branch linkages in glycogen, amylopectin and their beta-limit dextrins.. The protein is Isoamylase (iam) of Pseudomonas amyloderamosa.